Reading from the N-terminus, the 146-residue chain is MKFHLLLVCVAISLGPIPQSEAGVTEEQMWSAGKLMRDVCLPKYPKVSVEVADNIRNGDIPNSKDTNCYINCILEMMQAIKKGKFQLESTLKQMDIMLPDSYKDEYRKGINLCKDSTVGLKNAPNCDPAHALLSCLKNNIKVFVFP.

The first 22 residues, 1–22, serve as a signal peptide directing secretion; sequence MKFHLLLVCVAISLGPIPQSEA. 3 cysteine pairs are disulfide-bonded: cysteine 40-cysteine 72, cysteine 68-cysteine 126, and cysteine 113-cysteine 135.

The protein belongs to the PBP/GOBP family. As to expression, expressed in adult olfactory system. Expressed exclusively in a subset of chemosensory sensilla on the third antennal segment.

The protein localises to the secreted. Its function is as follows. Present in the aqueous fluid surrounding olfactory sensory dendrites and are thought to aid in the capture and transport of hydrophobic odorants into and through this fluid. The polypeptide is General odorant-binding protein 19a (Obp19a) (Drosophila melanogaster (Fruit fly)).